The primary structure comprises 520 residues: Ribonuclease Y (520 aa).

Residues 5–25 (ITIISSLLFLIVGLVVGSLIF) form a helical membrane-spanning segment. A disordered region spans residues 70–127 (RTEIENELRGRRTETQKAENRLLQREENLDRKDTSLSKREATLERKEESISKRQQQIE). Residues 210-273 (TVSVVTLPND…EIARIALEKL (64 aa)) form the KH domain. Residues 336–429 (VLNHSLEVSK…VAAADALSAA (94 aa)) enclose the HD domain.

It belongs to the RNase Y family.

Its subcellular location is the cell membrane. Endoribonuclease that initiates mRNA decay. In Listeria welshimeri serovar 6b (strain ATCC 35897 / DSM 20650 / CCUG 15529 / CIP 8149 / NCTC 11857 / SLCC 5334 / V8), this protein is Ribonuclease Y.